The primary structure comprises 318 residues: Tyrosine recombinase XerD (318 aa).

The region spanning 5–90 (PSDAKLTGLF…AMRHLYRFLL (86 aa)) is the Core-binding (CB) domain. In terms of domain architecture, Tyr recombinase spans 111–310 (GLPKVLSIAD…VEERLKSLVR (200 aa)). Catalysis depends on residues Arg-161, Lys-185, His-262, Arg-265, and His-288. Tyr-297 functions as the O-(3'-phospho-DNA)-tyrosine intermediate in the catalytic mechanism.

It belongs to the 'phage' integrase family. XerD subfamily. In terms of assembly, forms a cyclic heterotetrameric complex composed of two molecules of XerC and two molecules of XerD.

The protein resides in the cytoplasm. Its function is as follows. Site-specific tyrosine recombinase, which acts by catalyzing the cutting and rejoining of the recombining DNA molecules. The XerC-XerD complex is essential to convert dimers of the bacterial chromosome into monomers to permit their segregation at cell division. It also contributes to the segregational stability of plasmids. The protein is Tyrosine recombinase XerD of Bradyrhizobium diazoefficiens (strain JCM 10833 / BCRC 13528 / IAM 13628 / NBRC 14792 / USDA 110).